Reading from the N-terminus, the 260-residue chain is Pyridoxine 5'-phosphate synthase (260 aa).

Position 15 (Asn15) interacts with 3-amino-2-oxopropyl phosphate. 17 to 18 (DH) provides a ligand contact to 1-deoxy-D-xylulose 5-phosphate. Arg26 contacts 3-amino-2-oxopropyl phosphate. His51 functions as the Proton acceptor in the catalytic mechanism. Positions 53 and 58 each coordinate 1-deoxy-D-xylulose 5-phosphate. The active-site Proton acceptor is Glu78. Residue Thr108 participates in 1-deoxy-D-xylulose 5-phosphate binding. His199 functions as the Proton donor in the catalytic mechanism. 3-amino-2-oxopropyl phosphate-binding positions include Gly200 and 221–222 (GH).

The protein belongs to the PNP synthase family. As to quaternary structure, homooctamer; tetramer of dimers.

It localises to the cytoplasm. The catalysed reaction is 3-amino-2-oxopropyl phosphate + 1-deoxy-D-xylulose 5-phosphate = pyridoxine 5'-phosphate + phosphate + 2 H2O + H(+). It functions in the pathway cofactor biosynthesis; pyridoxine 5'-phosphate biosynthesis; pyridoxine 5'-phosphate from D-erythrose 4-phosphate: step 5/5. Catalyzes the complicated ring closure reaction between the two acyclic compounds 1-deoxy-D-xylulose-5-phosphate (DXP) and 3-amino-2-oxopropyl phosphate (1-amino-acetone-3-phosphate or AAP) to form pyridoxine 5'-phosphate (PNP) and inorganic phosphate. This Cupriavidus metallidurans (strain ATCC 43123 / DSM 2839 / NBRC 102507 / CH34) (Ralstonia metallidurans) protein is Pyridoxine 5'-phosphate synthase.